Consider the following 396-residue polypeptide: MLPSLQESMDGDEKELESSEEGGSAEERRLEPPSSSHYCLYSYRGSRLAQQRGDSEDGSPSGTNAETPSGDDFSLSLADTNLPSEVEPELRSFIAKRLSRGAVFEGLGNVASVELKIPGYRVGCYYCLFQNEKLLPETVTIDSERNPSEYVVCFLGGSEKGLELFRLELDKYIQGLKNNMNCEARGLESHIKSYLSSWFEDVVCPIQRVVLLFQEKLTFLLHAALSYTPVEVKESDEKTKRDINRFLSVASLQGLIHEGTMTSLCMAMTEEQHKSVVIDCSSSQPQFCNAGSNRFCEDWMQAFLNGAKGGNPFLFRQVLENFKLKAIQDTNNLKRFIRQAEMNHYALFKCYMFLKNCGSGDILLKIVKVEHEEMPEAKNVIAVLEEFMKEALDQSF.

The segment at 1 to 78 (MLPSLQESMD…SGDDFSLSLA (78 aa)) is disordered. A phosphoserine mark is found at S8 and S18. Residues 9-24 (MDGDEKELESSEEGGS) are compositionally biased toward acidic residues. A compositionally biased stretch (polar residues) spans 58 to 67 (GSPSGTNAET).

As to quaternary structure, component of the complex WDR11 composed of C17orf75, FAM91A1 and WDR11; FAM91A1 and WDR11 are required for proper location of the complex. Interacts with TBC1D23; this interaction may be indirect and recruits TBC1D23 to AP-1-derived vesicles. In terms of tissue distribution, highly expressed in testis and also expressed in fetal testis.

The protein resides in the golgi apparatus. It localises to the trans-Golgi network. The protein localises to the cytoplasmic vesicle. Functionally, as component of the WDR11 complex acts together with TBC1D23 to facilitate the golgin-mediated capture of vesicles generated using AP-1. May have a role in spermatogenesis. The polypeptide is Protein Njmu-R1 (C17orf75) (Homo sapiens (Human)).